The sequence spans 234 residues: MAKLTKRMSVIRDKVDATKQYDINEAISLLKELATAKFVESVDVAVNLGIDARKSDQNVRGATVLPHGTGRSVRVAVFAQGANAEAAKAAGAELVGMEDLADQIKKGEMNFDVVIASPDAMRVVGQLGQVLGPRGLMPNPKVGTVTPNVAEAVKNAKAGQVRYRNDKNGIIHTTIGKVDFDADKLKENLEALLVALKKAKPTQAKGVYIKKVSISTTMGAGVAVDQAGLNASAN.

The protein belongs to the universal ribosomal protein uL1 family. As to quaternary structure, part of the 50S ribosomal subunit.

In terms of biological role, binds directly to 23S rRNA. The L1 stalk is quite mobile in the ribosome, and is involved in E site tRNA release. Its function is as follows. Protein L1 is also a translational repressor protein, it controls the translation of the L11 operon by binding to its mRNA. The chain is Large ribosomal subunit protein uL1 from Klebsiella pneumoniae (strain 342).